A 320-amino-acid chain; its full sequence is Mitochondrial glutamate carrier 2 (320 aa).

Solcar repeat units lie at residues 11–97 (LSIT…LRQL), 105–215 (RNLK…LNQL), and 224–313 (ASFT…GIGE). 3 consecutive transmembrane segments (helical) span residues 17–37 (LING…IDLA), 66–86 (FLGM…EKAI), and 111–131 (MLAG…MEML). Serine 150 carries the phosphoserine modification. 3 helical membrane-spanning segments follow: residues 190–210 (GLGA…PLFA), 230–250 (FVAG…LDVL), and 293–313 (ALVI…GIGE).

This sequence belongs to the mitochondrial carrier (TC 2.A.29) family.

It is found in the mitochondrion inner membrane. The enzyme catalyses L-glutamate(in) + H(+)(in) = L-glutamate(out) + H(+)(out). Functionally, responsible for the transport of glutamate from the cytosol into the mitochondrial matrix with the concomitant import of a proton (symport system). The protein is Mitochondrial glutamate carrier 2 (Slc25a18) of Rattus norvegicus (Rat).